Consider the following 522-residue polypeptide: Maturase K (522 aa).

This sequence belongs to the intron maturase 2 family. MatK subfamily.

The protein localises to the plastid. It is found in the chloroplast. Usually encoded in the trnK tRNA gene intron. Probably assists in splicing its own and other chloroplast group II introns. This chain is Maturase K, found in Iris orientalis (Yellowband iris).